We begin with the raw amino-acid sequence, 124 residues long: Large ribosomal subunit protein bL17 (124 aa).

It belongs to the bacterial ribosomal protein bL17 family. As to quaternary structure, part of the 50S ribosomal subunit. Contacts protein L32.

The sequence is that of Large ribosomal subunit protein bL17 from Borrelia turicatae (strain 91E135).